We begin with the raw amino-acid sequence, 67 residues long: MARWNVCSYCGKPFEPGTGKMFVRNDGRVLFFCSRKCERYYFMGRNPRKLKWTKAYQEARLQRGIRK.

Zn(2+)-binding residues include C7, C10, C33, and C37. The C4-type zinc-finger motif lies at 7–37; it reads CSYCGKPFEPGTGKMFVRNDGRVLFFCSRKC.

Belongs to the eukaryotic ribosomal protein eL24 family. Part of the 50S ribosomal subunit. Forms a cluster with proteins L3 and L14. Zn(2+) serves as cofactor.

Binds to the 23S rRNA. The sequence is that of Large ribosomal subunit protein eL24 from Pyrococcus abyssi (strain GE5 / Orsay).